The sequence spans 205 residues: Proteasome subunit beta (205 aa).

Residues 1–9 constitute a propeptide, removed in mature form; by autocatalysis; the sequence is MNQTENMEG. The Nucleophile role is filled by Thr-10.

Belongs to the peptidase T1B family. In terms of assembly, the 20S proteasome core is composed of 14 alpha and 14 beta subunits that assemble into four stacked heptameric rings, resulting in a barrel-shaped structure. The two inner rings, each composed of seven catalytic beta subunits, are sandwiched by two outer rings, each composed of seven alpha subunits. The catalytic chamber with the active sites is on the inside of the barrel. Has a gated structure, the ends of the cylinder being occluded by the N-termini of the alpha-subunits. Is capped at one or both ends by the proteasome regulatory ATPase, PAN.

It localises to the cytoplasm. The catalysed reaction is Cleavage of peptide bonds with very broad specificity.. The formation of the proteasomal ATPase PAN-20S proteasome complex, via the docking of the C-termini of PAN into the intersubunit pockets in the alpha-rings, triggers opening of the gate for substrate entry. Interconversion between the open-gate and close-gate conformations leads to a dynamic regulation of the 20S proteasome proteolysis activity. Its function is as follows. Component of the proteasome core, a large protease complex with broad specificity involved in protein degradation. The protein is Proteasome subunit beta of Methanosphaera stadtmanae (strain ATCC 43021 / DSM 3091 / JCM 11832 / MCB-3).